Reading from the N-terminus, the 377-residue chain is Nitric oxide reductase FlRd-NAD(+) reductase (377 aa).

It belongs to the FAD-dependent oxidoreductase family. It depends on FAD as a cofactor.

It is found in the cytoplasm. The enzyme catalyses 2 reduced [nitric oxide reductase rubredoxin domain] + NAD(+) + H(+) = 2 oxidized [nitric oxide reductase rubredoxin domain] + NADH. Its pathway is nitrogen metabolism; nitric oxide reduction. One of at least two accessory proteins for anaerobic nitric oxide (NO) reductase. Reduces the rubredoxin moiety of NO reductase. This Escherichia coli O81 (strain ED1a) protein is Nitric oxide reductase FlRd-NAD(+) reductase.